We begin with the raw amino-acid sequence, 310 residues long: 4-hydroxyproline 2-epimerase (310 aa).

Catalysis depends on Cys-85, which acts as the Proton acceptor. Residues 86–87 (GH), His-205, and Asp-231 each bind substrate. The Proton donor role is filled by Cys-235. Residue 236–237 (GT) coordinates substrate.

This sequence belongs to the proline racemase family.

It carries out the reaction trans-4-hydroxy-L-proline = cis-4-hydroxy-D-proline. In terms of biological role, catalyzes the epimerization of trans-4-hydroxy-L-proline (t4LHyp) to cis-4-hydroxy-D-proline (c4DHyp). May be involved in a degradation pathway of t4LHyp, which would allow L.aggregata to grow on t4LHyp as a sole carbon source. Displays no proline racemase activity. In Roseibium aggregatum (strain ATCC 25650 / DSM 13394 / JCM 20685 / NBRC 16684 / NCIMB 2208 / IAM 12614 / B1) (Stappia aggregata), this protein is 4-hydroxyproline 2-epimerase.